The primary structure comprises 816 residues: Stemod-13(17)-ene synthase (816 aa).

Over residues 1-10 the composition is skewed to polar residues; the sequence is MMLLSSSYSG. Residues 1-24 form a disordered region; the sequence is MMLLSSSYSGGQFPGVSPLGTRPK. Residues Asp553, Asp557, Asn698, Thr702, and Glu706 each coordinate Mg(2+). The DDXXD motif motif lies at 553-557; sequence DDFFD.

The protein belongs to the terpene synthase family. The cofactor is Mg(2+).

The enzyme catalyses 9alpha-copalyl diphosphate = stemod-13(17)-ene + diphosphate. Functionally, catalyzes the conversion of syn-copalyl diphosphate to stemodene. This is Stemod-13(17)-ene synthase (KSL11) from Oryza sativa subsp. indica (Rice).